A 630-amino-acid polypeptide reads, in one-letter code: Chaperone protein HtpG (630 aa).

An a; substrate-binding region spans residues 1-343 (MAKHQFQTEA…SKDLPLNVSR (343 aa)). Residues 344–554 (EILQSNAVMA…KEDPAFMMAQ (211 aa)) are b. Residues 555–630 (IMKQMGQSGD…RLNRVIAKAI (76 aa)) form a c region.

This sequence belongs to the heat shock protein 90 family. Homodimer.

The protein resides in the cytoplasm. Functionally, molecular chaperone. Has ATPase activity. The chain is Chaperone protein HtpG from Sulfurimonas denitrificans (strain ATCC 33889 / DSM 1251) (Thiomicrospira denitrificans (strain ATCC 33889 / DSM 1251)).